The primary structure comprises 200 residues: Cytochrome c biogenesis ATP-binding export protein CcmA (200 aa).

The ABC transporter domain occupies 3–200 (LSGRGLRCVR…AREMRIGAAA (198 aa)). An ATP-binding site is contributed by 35-42 (GHNGAGKT).

Belongs to the ABC transporter superfamily. CcmA exporter (TC 3.A.1.107) family. The complex is composed of two ATP-binding proteins (CcmA) and two transmembrane proteins (CcmB).

Its subcellular location is the cell inner membrane. The catalysed reaction is heme b(in) + ATP + H2O = heme b(out) + ADP + phosphate + H(+). Part of the ABC transporter complex CcmAB involved in the biogenesis of c-type cytochromes; once thought to export heme, this seems not to be the case, but its exact role is uncertain. Responsible for energy coupling to the transport system. The protein is Cytochrome c biogenesis ATP-binding export protein CcmA of Rhodopseudomonas palustris (strain BisB5).